Consider the following 368-residue polypeptide: DNA replication and repair protein RecF (368 aa).

30–37 (GRNGQGKT) provides a ligand contact to ATP.

This sequence belongs to the RecF family.

Its subcellular location is the cytoplasm. The RecF protein is involved in DNA metabolism; it is required for DNA replication and normal SOS inducibility. RecF binds preferentially to single-stranded, linear DNA. It also seems to bind ATP. This chain is DNA replication and repair protein RecF, found in Trichlorobacter lovleyi (strain ATCC BAA-1151 / DSM 17278 / SZ) (Geobacter lovleyi).